The primary structure comprises 62 residues: Zinc metalloproteinase-disintegrin-like BaG (62 aa).

The Peptidase M12B domain maps to 24 to 54 (KTDLLNRSHDNAQLSPINLVVAVIMAHEMGH). N-linked (GlcNAc...) asparagine glycosylation occurs at Asn29. His50 contacts Zn(2+). Glu51 is a catalytic residue. Residue His54 coordinates Zn(2+).

The protein belongs to the venom metalloproteinase (M12B) family. P-III subfamily. P-IIIc sub-subfamily. In terms of assembly, dimer. Zn(2+) serves as cofactor. The N-terminus is blocked. As to expression, expressed by the venom gland.

Its subcellular location is the secreted. Inhibited by EDTA, and 1,10-phenanthroline. Snake venom Zinc metalloproteinase that inhibits ADP-induced platelet aggregation and inhibits the alpha-5/beta-1 (ITGA5/ITGB1) integrin, a fibronectin receptor. Has caseinolytic activity. Induces the detachment of cells that are bound to fibronectin. The polypeptide is Zinc metalloproteinase-disintegrin-like BaG (Bothrops alternatus (Urutu)).